The chain runs to 450 residues: Glucose-6-phosphate isomerase (450 aa).

The Proton donor role is filled by Glu-290. Catalysis depends on residues His-311 and Lys-425.

This sequence belongs to the GPI family.

It is found in the cytoplasm. It catalyses the reaction alpha-D-glucose 6-phosphate = beta-D-fructose 6-phosphate. The protein operates within carbohydrate biosynthesis; gluconeogenesis. It functions in the pathway carbohydrate degradation; glycolysis; D-glyceraldehyde 3-phosphate and glycerone phosphate from D-glucose: step 2/4. Functionally, catalyzes the reversible isomerization of glucose-6-phosphate to fructose-6-phosphate. This chain is Glucose-6-phosphate isomerase, found in Leuconostoc mesenteroides subsp. mesenteroides (strain ATCC 8293 / DSM 20343 / BCRC 11652 / CCM 1803 / JCM 6124 / NCDO 523 / NBRC 100496 / NCIMB 8023 / NCTC 12954 / NRRL B-1118 / 37Y).